Consider the following 348-residue polypeptide: tRNA N6-adenosine threonylcarbamoyltransferase (348 aa).

Fe cation contacts are provided by His111 and His115. Substrate contacts are provided by residues 134–138, Asp167, Gly180, and Asn276; that span reads LVSGG. Fe cation is bound at residue Asp304.

It belongs to the KAE1 / TsaD family. It depends on Fe(2+) as a cofactor.

It localises to the cytoplasm. The catalysed reaction is L-threonylcarbamoyladenylate + adenosine(37) in tRNA = N(6)-L-threonylcarbamoyladenosine(37) in tRNA + AMP + H(+). Functionally, required for the formation of a threonylcarbamoyl group on adenosine at position 37 (t(6)A37) in tRNAs that read codons beginning with adenine. Is involved in the transfer of the threonylcarbamoyl moiety of threonylcarbamoyl-AMP (TC-AMP) to the N6 group of A37, together with TsaE and TsaB. TsaD likely plays a direct catalytic role in this reaction. In Bordetella petrii (strain ATCC BAA-461 / DSM 12804 / CCUG 43448), this protein is tRNA N6-adenosine threonylcarbamoyltransferase.